Here is a 162-residue protein sequence, read N- to C-terminus: Caveolin-2 (162 aa).

The Cytoplasmic segment spans residues Met1–Lys86. Tyr19 carries the phosphotyrosine; by SRC modification. Ser20 and Ser23 each carry phosphoserine. Tyr27 carries the post-translational modification Phosphotyrosine; by SRC. At Ser36 the chain carries Phosphoserine. Residues Phe87–Leu107 constitute an intramembrane region (helical). At Ser108 to Asp162 the chain is on the cytoplasmic side.

This sequence belongs to the caveolin family. As to quaternary structure, monomer or homodimer. Interacts with CAV1; the interaction forms a stable heterooligomeric complex that is required for targeting to lipid rafts and for caveolae formation. Tyrosine phosphorylated forms do not form heterooligomers with the Tyr-19-phosphorylated form existing as a monomer or dimer, and the Tyr-27-form as a monomer only. Interacts (tyrosine phosphorylated form) with the SH2 domain-containing proteins, RASA1, NCK1 and SRC. Interacts (tyrosine phosphorylated form) with INSR, the interaction (Tyr-27-phosphorylated form) is increased on insulin stimulation. Interacts (Tyr-19 phosphorylated form) with MAPK1 (phosphorylated form); the interaction, promoted by insulin, leads to nuclear location and MAPK1 activation. Interacts with STAT3; the interaction is increased on insulin-induced tyrosine phosphorylation leading to STAT activation. Phosphorylated on serine and tyrosine residues. CAV1 promotes phosphorylation on Ser-23 which then targets the complex to the plasma membrane, lipid rafts and caveolae. Phosphorylation on Ser-36 appears to modulate mitosis in endothelial cells. Phosphorylation on both Tyr-19 and Tyr-27 is required for insulin-induced 'Ser-727' phosphorylation of STAT3 and its activation. Phosphorylation on Tyr-19 is required for insulin-induced phosphorylation of MAPK1 and DNA binding of STAT3. Tyrosine phosphorylation is induced by both EGF and insulin (By. similarity).

The protein resides in the nucleus. Its subcellular location is the cytoplasm. The protein localises to the golgi apparatus membrane. It localises to the cell membrane. It is found in the membrane. The protein resides in the caveola. Functionally, may act as a scaffolding protein within caveolar membranes. Interacts directly with G-protein alpha subunits and can functionally regulate their activity. Acts as an accessory protein in conjunction with CAV1 in targeting to lipid rafts and driving caveolae formation. The Ser-36 phosphorylated form has a role in modulating mitosis in endothelial cells. Positive regulator of cellular mitogenesis of the MAPK signaling pathway. Required for the insulin-stimulated nuclear translocation and activation of MAPK1 and STAT3, and the subsequent regulation of cell cycle progression. The polypeptide is Caveolin-2 (CAV2) (Gorilla gorilla gorilla (Western lowland gorilla)).